Consider the following 411-residue polypeptide: Arginine deiminase (411 aa).

Residue Cys-401 is the Amidino-cysteine intermediate of the active site.

This sequence belongs to the arginine deiminase family.

It localises to the cytoplasm. It carries out the reaction L-arginine + H2O = L-citrulline + NH4(+). It participates in amino-acid degradation; L-arginine degradation via ADI pathway; carbamoyl phosphate from L-arginine: step 1/2. This is Arginine deiminase from Streptococcus pyogenes serotype M2 (strain MGAS10270).